A 379-amino-acid chain; its full sequence is Cytochrome b (379 aa).

The next 4 membrane-spanning stretches (helical) occupy residues 33–53 (FGSL…FLAM), 77–98 (WILR…YIHV), 113–133 (WNIG…GYVL), and 178–198 (FFAF…VHLL). Residues His83 and His97 each coordinate heme b. 2 residues coordinate heme b: His182 and His196. His201 lines the a ubiquinone pocket. Helical transmembrane passes span 226 to 246 (IKDI…VLFS), 288 to 308 (LGGV…PVLH), 320 to 340 (LSQC…WIGG), and 347 to 367 (YVIX…XXXX).

The protein belongs to the cytochrome b family. The cytochrome bc1 complex contains 11 subunits: 3 respiratory subunits (MT-CYB, CYC1 and UQCRFS1), 2 core proteins (UQCRC1 and UQCRC2) and 6 low-molecular weight proteins (UQCRH/QCR6, UQCRB/QCR7, UQCRQ/QCR8, UQCR10/QCR9, UQCR11/QCR10 and a cleavage product of UQCRFS1). This cytochrome bc1 complex then forms a dimer. Requires heme b as cofactor.

It is found in the mitochondrion inner membrane. Component of the ubiquinol-cytochrome c reductase complex (complex III or cytochrome b-c1 complex) that is part of the mitochondrial respiratory chain. The b-c1 complex mediates electron transfer from ubiquinol to cytochrome c. Contributes to the generation of a proton gradient across the mitochondrial membrane that is then used for ATP synthesis. This chain is Cytochrome b (MT-CYB), found in Myotis goudotii (Malagasy mouse-eared bat).